A 111-amino-acid polypeptide reads, in one-letter code: Large ribosomal subunit protein uL22 (111 aa).

This sequence belongs to the universal ribosomal protein uL22 family. In terms of assembly, part of the 50S ribosomal subunit.

Functionally, this protein binds specifically to 23S rRNA; its binding is stimulated by other ribosomal proteins, e.g. L4, L17, and L20. It is important during the early stages of 50S assembly. It makes multiple contacts with different domains of the 23S rRNA in the assembled 50S subunit and ribosome. Its function is as follows. The globular domain of the protein is located near the polypeptide exit tunnel on the outside of the subunit, while an extended beta-hairpin is found that lines the wall of the exit tunnel in the center of the 70S ribosome. The protein is Large ribosomal subunit protein uL22 of Chlamydia trachomatis serovar L2b (strain UCH-1/proctitis).